A 463-amino-acid polypeptide reads, in one-letter code: Senescence/dehydration-associated protein At3g51250 (463 aa).

Positions 1–12 (MNPSHGGDDKQR) are enriched in basic and acidic residues. Disordered stretches follow at residues 1–31 (MNPSHGGDDKQRPAMYPQVDQSIPDNPFAST), 52–74 (PNLFPDHGDASNDQSPSAPPQAT), and 146–172 (IHPPKEKGQGSGSDSDDEQGQKSKSKS). A compositionally biased stretch (polar residues) spans 19–31 (VDQSIPDNPFAST). In terms of domain architecture, Senescence spans 269-437 (IASGSGKLIR…AWVAFKIRKA (169 aa)).

The sequence is that of Senescence/dehydration-associated protein At3g51250 from Arabidopsis thaliana (Mouse-ear cress).